A 567-amino-acid polypeptide reads, in one-letter code: MTNDHDIDIKPRSRDVTDGLERTAARGMLRAVGMGDDDWEKPQIGVASSWNEITPCNLTLKKLAGFAKEGVHEAGGYPLEFGTISVSDGISMGHEGMHYSLVSREVITDSVETVMSAERLDGSVLLAGCDKSIPGMLMAAARLNLSSVFLYNGSTMPGTAKMSDGTEREVTLIDAFEAVGACRAGTMSREDVDAIERSVCPGEGACGGMYTANTMASAAEAMGMSLPGSAAPPAIHQDRTLYARRSGEAVVELLRRGIRARDIITRESLLNAVAVVMALGGSTNAVLHLMAIAHEAEVDLTLEDFNAVGDKVPHLGDLKPFGRYVMNDVFKIGGIPVVMKALLDAGLINGDCLTITGRTVAENLQGINPPDPDGQILRAIDNPIHKTGGLTILHGSLAPGGAVVKTAGFDTERFEGTARVFNQEAPAMDAVLNGELKAGDVVIIRYEGPKGGPGMREMLAITGAIKGAGIGKEVLLITDGRFSGGSTGLCIGHVAPEAVDGGPIALVEDGDPILVDISQRRIDLLVDESILEERRKTLQHPENPRLHGVLGKYAKLVQSASMGAVCF.

Cys56 lines the [2Fe-2S] cluster pocket. Asp88 is a Mg(2+) binding site. Cys129 serves as a coordination point for [2Fe-2S] cluster. Asp130 and Lys131 together coordinate Mg(2+). Residue Lys131 is modified to N6-carboxylysine. Cys206 lines the [2Fe-2S] cluster pocket. Glu457 is a binding site for Mg(2+). Catalysis depends on Ser483, which acts as the Proton acceptor.

Belongs to the IlvD/Edd family. Homodimer. Requires [2Fe-2S] cluster as cofactor. It depends on Mg(2+) as a cofactor.

It carries out the reaction (2R)-2,3-dihydroxy-3-methylbutanoate = 3-methyl-2-oxobutanoate + H2O. The enzyme catalyses (2R,3R)-2,3-dihydroxy-3-methylpentanoate = (S)-3-methyl-2-oxopentanoate + H2O. Its pathway is amino-acid biosynthesis; L-isoleucine biosynthesis; L-isoleucine from 2-oxobutanoate: step 3/4. It functions in the pathway amino-acid biosynthesis; L-valine biosynthesis; L-valine from pyruvate: step 3/4. In terms of biological role, functions in the biosynthesis of branched-chain amino acids. Catalyzes the dehydration of (2R,3R)-2,3-dihydroxy-3-methylpentanoate (2,3-dihydroxy-3-methylvalerate) into 2-oxo-3-methylpentanoate (2-oxo-3-methylvalerate) and of (2R)-2,3-dihydroxy-3-methylbutanoate (2,3-dihydroxyisovalerate) into 2-oxo-3-methylbutanoate (2-oxoisovalerate), the penultimate precursor to L-isoleucine and L-valine, respectively. This Corynebacterium efficiens (strain DSM 44549 / YS-314 / AJ 12310 / JCM 11189 / NBRC 100395) protein is Dihydroxy-acid dehydratase 2.